We begin with the raw amino-acid sequence, 380 residues long: DNA primase small subunit PriS (380 aa).

Active-site residues include Asp-101, Asp-103, and Asp-282.

This sequence belongs to the eukaryotic-type primase small subunit family. As to quaternary structure, heterodimer of a small subunit (PriS) and a large subunit (PriL). The cofactor is Mg(2+). Requires Mn(2+) as cofactor.

Functionally, catalytic subunit of DNA primase, an RNA polymerase that catalyzes the synthesis of short RNA molecules used as primers for DNA polymerase during DNA replication. The small subunit contains the primase catalytic core and has DNA synthesis activity on its own. Binding to the large subunit stabilizes and modulates the activity, increasing the rate of DNA synthesis while decreasing the length of the DNA fragments, and conferring RNA synthesis capability. The DNA polymerase activity may enable DNA primase to also catalyze primer extension after primer synthesis. May also play a role in DNA repair. This is DNA primase small subunit PriS from Hyperthermus butylicus (strain DSM 5456 / JCM 9403 / PLM1-5).